A 479-amino-acid chain; its full sequence is Proline--tRNA ligase (479 aa).

This sequence belongs to the class-II aminoacyl-tRNA synthetase family. ProS type 3 subfamily. As to quaternary structure, homodimer.

The protein localises to the cytoplasm. It catalyses the reaction tRNA(Pro) + L-proline + ATP = L-prolyl-tRNA(Pro) + AMP + diphosphate. Functionally, catalyzes the attachment of proline to tRNA(Pro) in a two-step reaction: proline is first activated by ATP to form Pro-AMP and then transferred to the acceptor end of tRNA(Pro). This chain is Proline--tRNA ligase, found in Mesomycoplasma hyopneumoniae (strain J / ATCC 25934 / NCTC 10110) (Mycoplasma hyopneumoniae).